Reading from the N-terminus, the 231-residue chain is L-ribulose-5-phosphate 4-epimerase SgbE (231 aa).

Residues 27 to 28, 44 to 45, and 74 to 75 contribute to the substrate site; these read GN, SG, and SS. Residues Asp76, His95, and His97 each coordinate Zn(2+). Residue Asp120 is the Proton donor/acceptor of the active site. Position 171 (His171) interacts with Zn(2+). Catalysis depends on Tyr229, which acts as the Proton donor/acceptor.

The protein belongs to the aldolase class II family. AraD/FucA subfamily. The cofactor is Zn(2+).

The enzyme catalyses L-ribulose 5-phosphate = D-xylulose 5-phosphate. Its function is as follows. Catalyzes the interconversion of L-ribulose 5-phosphate (LRu5P) and D-xylulose 5-phosphate (D-Xu5P) via a retroaldol/aldol mechanism (carbon-carbon bond cleavage analogous to a class II aldolase reaction). May be involved in the utilization of 2,3-diketo-L-gulonate. This Haemophilus influenzae (strain ATCC 51907 / DSM 11121 / KW20 / Rd) protein is L-ribulose-5-phosphate 4-epimerase SgbE.